The primary structure comprises 258 residues: Global transcriptional regulator CodY (258 aa).

The interval 1–156 (MSSLLEKTRQ…SATIIGLEIL (156 aa)) is GAF domain. The H-T-H motif DNA-binding region spans 204 to 223 (ASKIADKVGITRSVIVNALR).

Belongs to the CodY family.

It is found in the cytoplasm. Functionally, DNA-binding global transcriptional regulator which is involved in the adaptive response to starvation and acts by directly or indirectly controlling the expression of numerous genes in response to nutrient availability. During rapid exponential growth, CodY is highly active and represses genes whose products allow adaptation to nutrient depletion. The polypeptide is Global transcriptional regulator CodY (Clostridium tetani (strain Massachusetts / E88)).